The chain runs to 93 residues: YcgL domain-containing protein VSAL_I1068 (93 aa).

The YcgL domain maps to 1-84 (MYCSIYKSSK…PPENLLEKYK (84 aa)).

The protein is YcgL domain-containing protein VSAL_I1068 of Aliivibrio salmonicida (strain LFI1238) (Vibrio salmonicida (strain LFI1238)).